We begin with the raw amino-acid sequence, 111 residues long: uncharacterized protein (111 aa).

2 helical membrane passes run 18–38 (LNVF…LFVS) and 42–62 (LALA…RTFP).

The protein localises to the membrane. This is an uncharacterized protein from Saccharomyces cerevisiae (strain ATCC 204508 / S288c) (Baker's yeast).